A 2897-amino-acid polypeptide reads, in one-letter code: Chromodomain-helicase-DNA-binding protein 9 (2897 aa).

The segment covering 173–201 (QCTSLRSQQNRNNLNPGQNSLSQSKNFMN) has biased composition (polar residues). Disordered stretches follow at residues 173–265 (QCTS…CSVS), 482–525 (QRQP…KQEK), and 537–671 (AKER…SAPL). A Glycyl lysine isopeptide (Lys-Gly) (interchain with G-Cter in SUMO2) cross-link involves residue Lys197. Residues 220–235 (SNSQQSISMQQFSQTS) show a composition bias toward low complexity. Polar residues-rich tracts occupy residues 247-260 (HQEG…PNMT) and 484-506 (QPPS…TQVR). An N6-acetyllysine modification is found at Lys499. Basic and acidic residues predominate over residues 508-525 (MSEKKQRKKVESESKQEK). Ser550 is subject to Phosphoserine. Over residues 573–593 (KPKDKDSKKTKTCSKLKEKTK) the composition is skewed to basic and acidic residues. Lys596 is covalently cross-linked (Glycyl lysine isopeptide (Lys-Gly) (interchain with G-Cter in SUMO2)). Ser611 is subject to Phosphoserine. Positions 634-644 (RRSNRQIKRKK) are enriched in basic residues. Residues 645–660 (YAEDIEGKQSEEEVKG) are compositionally biased toward basic and acidic residues. Chromo domains are found at residues 690-761 (AIVD…HFFA) and 773-839 (VEVD…RLDR). Residues 868–872 (LNWLL) carry the LXXLL motif 1 motif. One can recognise a Helicase ATP-binding domain in the interval 872 to 1046 (LFNWYNRRNC…FSLLHFLEPL (175 aa)). 885–892 (DEMGLGKT) provides a ligand contact to ATP. The short motif at 997-1000 (DEAH) is the DEAH box element. Positions 1036-1040 (LFSLL) match the LXXLL motif 2 motif. The region spanning 1186–1337 (LIDKLLPKMK…KAVLQSMSGR (152 aa)) is the Helicase C-terminal domain. Residues 1461–1484 (KDELAELSEAESEGDEKPKLRRPC) form a disordered region. Over residues 1465–1474 (AELSEAESEG) the composition is skewed to acidic residues. A phosphoserine mark is found at Ser1468 and Ser1472. A compositionally biased stretch (basic and acidic residues) spans 1475–1484 (DEKPKLRRPC). Residues Lys1588, Lys1738, and Lys1903 each participate in a glycyl lysine isopeptide (Lys-Gly) (interchain with G-Cter in SUMO2) cross-link. Ser2026 carries the phosphoserine modification. The short motif at 2031–2035 (LPRLL) is the LXXLL motif 3 element. A Glycyl lysine isopeptide (Lys-Gly) (interchain with G-Cter in SUMO2) cross-link involves residue Lys2038. Disordered stretches follow at residues 2050–2238 (ENLK…QMNN) and 2305–2337 (GAAT…SKVK). A phosphoserine mark is found at Ser2058 and Ser2059. Lys2074 is covalently cross-linked (Glycyl lysine isopeptide (Lys-Gly) (interchain with G-Cter in SUMO2)). A phosphoserine mark is found at Ser2075 and Ser2079. The span at 2094–2104 (SGGKCETDRRM) shows a compositional bias: basic and acidic residues. Low complexity predominate over residues 2141–2193 (SSCSSRSSSSSSSSSCSHSRSGSSSSSSSSCSSASSSSSSSTSSSSSSSSSSS). Positions 2203–2216 (AQKRESTTHMKAYD) are enriched in basic and acidic residues. A compositionally biased stretch (polar residues) spans 2221–2238 (ASLSTTQDETQDSFQMNN). The interval 2332 to 2481 (QMSKVKKHVR…LSYTQPQGIP (150 aa)) is binds A/T-rich DNA. Glycyl lysine isopeptide (Lys-Gly) (interchain with G-Cter in SUMO2) cross-links involve residues Lys2350, Lys2356, and Lys2361. The a.T hook-like stretch occupies residues 2429–2436 (KKRRGRRK). An LXXLL motif 4 motif is present at residues 2721–2725 (LPNLL). The segment at 2729–2777 (GLLTKPTESGTEDKKGSDSKESEGKTERTESQSSENGGENSVSSSPSTS) is disordered. A compositionally biased stretch (basic and acidic residues) spans 2739-2758 (TEDKKGSDSKESEGKTERTE). Residues 2759 to 2777 (SQSSENGGENSVSSSPSTS) are compositionally biased toward low complexity. Residues 2793 to 2797 (LNPLL) carry the LXXLL motif 5 motif. The interval 2827-2897 (VQNKNSDLGS…SEDSDSSNED (71 aa)) is disordered. The segment covering 2840 to 2857 (VEVKEEDSRIKDQEDKGG) has biased composition (basic and acidic residues). Lys2843 is covalently cross-linked (Glycyl lysine isopeptide (Lys-Gly) (interchain with G-Cter in SUMO2)). The span at 2877-2888 (ASSGSDSTSSSS) shows a compositional bias: low complexity.

It belongs to the SNF2/RAD54 helicase family. As to quaternary structure, interacts with PPARA. Probably interacts with ESR1 and NR1I3. Phosphorylated on serine and tyrosine residues. As to expression, widely expressed at low levels. In bone marrow, expression is restricted to osteoprogenitor cells adjacent to mature osteoblasts.

It is found in the cytoplasm. The protein localises to the nucleus. The catalysed reaction is ATP + H2O = ADP + phosphate + H(+). Functionally, probable ATP-dependent chromatin-remodeling factor. Acts as a transcriptional coactivator for PPARA and possibly other nuclear receptors. Has DNA-dependent ATPase activity and binds to A/T-rich DNA. Associates with A/T-rich regulatory regions in promoters of genes that participate in the differentiation of progenitors during osteogenesis. The sequence is that of Chromodomain-helicase-DNA-binding protein 9 (CHD9) from Homo sapiens (Human).